A 342-amino-acid chain; its full sequence is RNA 3'-terminal phosphate cyclase (342 aa).

Belongs to the RNA 3'-terminal cyclase family. Type 1 subfamily.

The protein resides in the cytoplasm. It catalyses the reaction a 3'-end 3'-phospho-ribonucleotide-RNA + GTP = a 3'-end 2',3'-cyclophospho-ribonucleotide-RNA + GMP + diphosphate. With respect to regulation, inhibited by GMP. Catalyzes the GTP-dependent conversion of 3'-phosphate to a 2',3'-cyclic phosphodiester at the end of RNA. The biological role of this enzyme is unknown but it is likely to function in some aspects of cellular RNA processing. This Pyrococcus furiosus (strain ATCC 43587 / DSM 3638 / JCM 8422 / Vc1) protein is RNA 3'-terminal phosphate cyclase.